The primary structure comprises 112 residues: Small ribosomal subunit protein bS6 (112 aa).

This sequence belongs to the bacterial ribosomal protein bS6 family.

Binds together with bS18 to 16S ribosomal RNA. In Chlamydia felis (strain Fe/C-56) (Chlamydophila felis), this protein is Small ribosomal subunit protein bS6.